Consider the following 307-residue polypeptide: GTPase Era (307 aa).

Residues 17 to 186 form the Era-type G domain; sequence RCGFVAIVGR…LELIKPYLPE (170 aa). Residues 25-32 form a G1 region; sequence GRPNVGKS. 25–32 serves as a coordination point for GTP; sequence GRPNVGKS. The segment at 51–55 is G2; sequence QTTRN. The tract at residues 72–75 is G3; it reads DTPG. Residues 72–76 and 133–136 contribute to the GTP site; these read DTPGF and NKID. The segment at 133-136 is G4; that stretch reads NKID. The tract at residues 165–167 is G5; the sequence is VSA. The KH type-2 domain occupies 217 to 293; the sequence is LGEELPYAMN…FLKVWVKVKS (77 aa).

The protein belongs to the TRAFAC class TrmE-Era-EngA-EngB-Septin-like GTPase superfamily. Era GTPase family. As to quaternary structure, monomer.

The protein localises to the cytoplasm. Its subcellular location is the cell inner membrane. In terms of biological role, an essential GTPase that binds both GDP and GTP, with rapid nucleotide exchange. Plays a role in 16S rRNA processing and 30S ribosomal subunit biogenesis and possibly also in cell cycle regulation and energy metabolism. This Neisseria meningitidis serogroup B (strain ATCC BAA-335 / MC58) protein is GTPase Era.